Consider the following 125-residue polypeptide: uncharacterized protein (125 aa).

Residues 10-26 (IIILVCLMFLAIMVYIY) traverse the membrane as a helical segment.

It is found in the membrane. This is an uncharacterized protein from Rickettsia prowazekii (strain Madrid E).